We begin with the raw amino-acid sequence, 143 residues long: Nuclear transcription factor Y subunit B-4 (143 aa).

The tract at residues 1-23 (MSEGFDGTENGGGGGGGGVGKEQ) is disordered. The span at 9 to 20 (ENGGGGGGGGVG) shows a compositional bias: gly residues. The DNA-binding element occupies 27–33 (LPIANIG). The segment at 54 to 65 (VQECVSEFISFI) is subunit association domain (SAD). Over residues 117-130 (KGSRASELPVKKDV) the composition is skewed to basic and acidic residues. The segment at 117 to 143 (KGSRASELPVKKDVVLNGDPGSSFEGM) is disordered.

The protein belongs to the NFYB/HAP3 subunit family. In terms of assembly, heterotrimeric transcription factor composed of three components, NF-YA, NF-YB and NF-YC. NF-YB and NF-YC must interact and dimerize for NF-YA association and DNA binding. In terms of tissue distribution, ubiquitous.

Its subcellular location is the nucleus. In terms of biological role, component of the NF-Y/HAP transcription factor complex. The NF-Y complex stimulates the transcription of various genes by recognizing and binding to a CCAAT motif in promoters. May regulate the expression of photosynthetic genes, and may be involved in chloroplast and amyloplast development. This is Nuclear transcription factor Y subunit B-4 (NFYB4) from Oryza sativa subsp. japonica (Rice).